The primary structure comprises 200 residues: Cysteine dioxygenase type 1 (200 aa).

Residues histidine 86, histidine 88, and histidine 140 each contribute to the Fe cation site. Positions 93 to 157 form a cross-link, 3'-(S-cysteinyl)-tyrosine (Cys-Tyr); it reads CFLKMLQGNL…TEPAVSLHLY (65 aa).

Belongs to the cysteine dioxygenase family. In terms of assembly, monomer. Requires Fe cation as cofactor. Ni(2+) is required as a cofactor. Zn(2+) serves as cofactor. Post-translationally, the thioether cross-link between Cys-93 and Tyr-157 plays a structural role through stabilizing the Fe(2+) ion, and prevents the production of highly damaging free hydroxyl radicals by holding the oxygen radical via hydroxyl hydrogen.

The enzyme catalyses L-cysteine + O2 = 3-sulfino-L-alanine + H(+). It functions in the pathway organosulfur biosynthesis; taurine biosynthesis; hypotaurine from L-cysteine: step 1/2. Functionally, catalyzes the oxidation of cysteine to cysteine sulfinic acid with addition of molecular dioxygen. The sequence is that of Cysteine dioxygenase type 1 (CDO1) from Bos taurus (Bovine).